The following is a 289-amino-acid chain: Rhodopsin (289 aa).

The Extracellular segment spans residues 1–7 (YLVSPAA). Residues 8-32 (YAALGAYMFLLILIGFPVNFLTLYV) form a helical membrane-spanning segment. The Cytoplasmic segment spans residues 33–44 (TLEHKKLRTPLN). The chain crosses the membrane as a helical span at residues 45-67 (YILLNLAVADLFMVLGGFTTTMY). Topologically, residues 68-81 (TSMHGYFVLGRLGC) are extracellular. Cys81 and Cys158 are joined by a disulfide. Residues 82–104 (NLEGFFATLGGEIALWSLVVLAI) traverse the membrane as a helical segment. The short motif at 105-107 (ERW) is the 'Ionic lock' involved in activated form stabilization element. The Cytoplasmic portion of the chain corresponds to 105 to 123 (ERWIVVCKPISNFRFTEDN). A helical transmembrane segment spans residues 124–144 (AIMGLAFSWVMALTCAVPPLV). Residues 145–173 (GWSRYIPEGMQCSCGVDYYTRAEGFNNES) lie on the Extracellular side of the membrane. A glycan (N-linked (GlcNAc...) asparagine) is linked at Asn171. A helical transmembrane segment spans residues 174-195 (FVIYMFIVHFPIPLSVIFFCYG). Topologically, residues 196 to 223 (RLLCAVKEAAAAQQESETTQRAEKEVSR) are cytoplasmic. The helical transmembrane segment at 224–245 (MVVILVIGFLVCWLPYASVAWW) threads the bilayer. Topologically, residues 246-257 (IFCNQGSDFGPI) are extracellular. Residues 258–279 (FMTLPSFFAKRPAIYNPMIYIC) traverse the membrane as a helical segment. Position 267 is an N6-(retinylidene)lysine (Lys267). Residues 280–289 (MNKQFRHCMI) are Cytoplasmic-facing.

Belongs to the G-protein coupled receptor 1 family. Opsin subfamily. Post-translationally, phosphorylated on some or all of the serine and threonine residues present in the C-terminal region. In terms of processing, contains one covalently linked retinal chromophore.

It localises to the membrane. The protein localises to the cell projection. Its subcellular location is the cilium. It is found in the photoreceptor outer segment. Photoreceptor required for image-forming vision at low light intensity. While most salt water fish species use retinal as chromophore, most freshwater fish use 3-dehydroretinal, or a mixture of retinal and 3-dehydroretinal. Light-induced isomerization of 11-cis to all-trans retinal triggers a conformational change that activates signaling via G-proteins. Subsequent receptor phosphorylation mediates displacement of the bound G-protein alpha subunit by arrestin and terminates signaling. The protein is Rhodopsin (rho) of Batrachocottus multiradiatus (Baikal sculpin).